A 145-amino-acid chain; its full sequence is Bacilliredoxin SSP1241 (145 aa).

Belongs to the bacilliredoxin family.

The chain is Bacilliredoxin SSP1241 from Staphylococcus saprophyticus subsp. saprophyticus (strain ATCC 15305 / DSM 20229 / NCIMB 8711 / NCTC 7292 / S-41).